The chain runs to 286 residues: Orotidine 5'-phosphate decarboxylase (286 aa).

Residues D35, 57-59 (KTH), 89-98 (DRKFADIGNT), Y239, and R257 contribute to the substrate site. Catalysis depends on K91, which acts as the Proton donor.

Belongs to the OMP decarboxylase family.

It catalyses the reaction orotidine 5'-phosphate + H(+) = UMP + CO2. The protein operates within pyrimidine metabolism; UMP biosynthesis via de novo pathway; UMP from orotate: step 2/2. The chain is Orotidine 5'-phosphate decarboxylase (URA3) from Yarrowia lipolytica (strain CLIB 122 / E 150) (Yeast).